Here is a 575-residue protein sequence, read N- to C-terminus: MPQNHRLQFSVEESICFQKGQEVSELLSISLDPDIRVQEVNDYVSIIGSLELTGEYNIDQNKHTEEIYTDKRFVEQVRKREDGSAELTHCFPVDITIPKNKVSHLQDVFVFIDAFDYQLTDSRILTIQADLAIEGLLDDTQDKEPEIPLYEAPAAFREEELSEPPAHSVVEEPGASSAEEAVLQHEPPAEPPELFISKAGLREELETEKAESEPPESVASEPEAREDVKEEEESEELAVPETEVRAESETEESEPEPDPSEIEIQEIVKAKKETAEPAAAIADVREEADSPAETELREHVGAEESPALEAELHSETVIAKEKEETTVSPNHEYALRQEAQNEEAAQSDQADPALCQEEAEPDEALESVSEAALSIEDSRETASAVYMENDNADLHFHFNQKTSSEEASQEELPEPAYRTFLPEQEEEDSFYSAPKLLEEEEQEEESFEIEVRKTPSAEEPKEETPFQSFQLPESSETERKETDAVPRVAPAAETKEPQTKESDNSLYLTKLFTKEADEFSRMKICIVQQEDTIERLCERYEITSQQLIRMNSLALDDELKAGQILYIPQYKNSHA.

The segment at 159 to 502 is disordered; it reads EELSEPPAHS…ETKEPQTKES (344 aa). Basic and acidic residues predominate over residues 200-212; the sequence is GLREELETEKAES. Acidic residues-rich tracts occupy residues 229–238 and 249–264; these read KEEEESEELA and ETEE…EIEI. Basic and acidic residues-rich tracts occupy residues 266-275, 283-302, and 310-325; these read EIVKAKKETA, DVRE…HVGA, and AELH…KEET. Over residues 438 to 448 the composition is skewed to acidic residues; that stretch reads EEEEQEEESFE. A compositionally biased stretch (basic and acidic residues) spans 449 to 464; that stretch reads IEVRKTPSAEEPKEET. Over residues 465–474 the composition is skewed to polar residues; sequence PFQSFQLPES. Positions 493 to 502 are enriched in basic and acidic residues; that stretch reads ETKEPQTKES. One can recognise a LysM domain in the interval 523-567; sequence KICIVQQEDTIERLCERYEITSQQLIRMNSLALDDELKAGQILYI.

Required for assembly of a normal spore coat. May be a component of the innermost layer of the spore coat that aids in its adherence to the prespore. The sequence is that of Stage VI sporulation protein D (spoVID) from Bacillus subtilis (strain 168).